Reading from the N-terminus, the 25-residue chain is GLMSSIGKALGGLIVDVLKPKTPAS.

As to expression, expressed by the skin dorsal glands.

It localises to the secreted. Its function is as follows. Has antimicrobial activity against L.lactis and S.uberis. This chain is Aurein-5.2, found in Ranoidea raniformis (Southern bell frog).